The chain runs to 248 residues: 14-3-3-like protein G-BOX factor 14 kappa (248 aa).

Ser-70, Ser-112, and Ser-193 each carry phosphoserine. Residue Thr-214 is modified to Phosphothreonine.

It belongs to the 14-3-3 family. In terms of assembly, interacts with the isocitrate dehydrogenase IDH3, and malate dehydrogenases MDH1 and MDH2. Interacts with CINV1.

The protein resides in the nucleus. It localises to the cytoplasm. Is associated with a DNA binding complex that binds to the G box, a well-characterized cis-acting DNA regulatory element found in plant genes. Involved in the regulation of nutrient metabolism. Negative regulator of freezing tolerance that modulates cold-responsive C-repeat-binding factors (CBF) DREB1A AND DREB1B proteins stability by facilitating their ubiquitin-mediated degradation; this processus is counteracted by B1L. The polypeptide is 14-3-3-like protein G-BOX factor 14 kappa (Arabidopsis thaliana (Mouse-ear cress)).